We begin with the raw amino-acid sequence, 516 residues long: Methionine--tRNA ligase (516 aa).

A 'HIGH' region motif is present at residues 13–23 (FYPNGKPHIGH). The 'KMSKS' region signature appears at 299-303 (KMSKS). Lys-302 contributes to the ATP binding site.

The protein belongs to the class-I aminoacyl-tRNA synthetase family. MetG type 2B subfamily. In terms of assembly, monomer.

It localises to the cytoplasm. The enzyme catalyses tRNA(Met) + L-methionine + ATP = L-methionyl-tRNA(Met) + AMP + diphosphate. Its function is as follows. Is required not only for elongation of protein synthesis but also for the initiation of all mRNA translation through initiator tRNA(fMet) aminoacylation. The sequence is that of Methionine--tRNA ligase from Mesorhizobium japonicum (strain LMG 29417 / CECT 9101 / MAFF 303099) (Mesorhizobium loti (strain MAFF 303099)).